Reading from the N-terminus, the 122-residue chain is Small ribosomal subunit protein bS16 (122 aa).

The tract at residues 87-122 is disordered; it reads VGKAKQAEARKAGAKNVAKQAAEAKAEETPADNTEA.

It belongs to the bacterial ribosomal protein bS16 family.

This Prochlorococcus marinus (strain MIT 9303) protein is Small ribosomal subunit protein bS16.